An 817-amino-acid chain; its full sequence is Transcription factor yanR (817 aa).

The segment at residues 19 to 46 (CIVCRRRKVRCGREHPECANCVRMKENC) is a DNA-binding region (zn(2)-C6 fungal-type). 3 disordered regions span residues 102–161 (GNVL…PQVD), 180–218 (HHAS…YSGL), and 733–775 (SLSS…VADS). The span at 113 to 127 (LPRPTISPASAPPPQ) shows a compositional bias: pro residues. The span at 146-158 (SSTILTPAPSSHP) shows a compositional bias: polar residues. Residues 184–195 (SRAGTSRTSSVS) show a composition bias toward low complexity. Polar residues-rich tracts occupy residues 208-217 (APSTSTSYSG) and 748-760 (EAPS…QMPS).

It is found in the nucleus. In terms of biological role, transcription factor that regulates the expression of the gene cluster that mediates the biosynthesis of yanuthone D, a fungal isoprenoid epoxycyclohexenone that acts as an antibiotic against fungi and bacteria. The polypeptide is Transcription factor yanR (Aspergillus niger (strain ATCC 1015 / CBS 113.46 / FGSC A1144 / LSHB Ac4 / NCTC 3858a / NRRL 328 / USDA 3528.7)).